Here is a 121-residue protein sequence, read N- to C-terminus: Large ribosomal subunit protein uL14 (121 aa).

It belongs to the universal ribosomal protein uL14 family. Part of the 50S ribosomal subunit. Forms a cluster with proteins L3 and L19. In the 70S ribosome, L14 and L19 interact and together make contacts with the 16S rRNA in bridges B5 and B8.

Functionally, binds to 23S rRNA. Forms part of two intersubunit bridges in the 70S ribosome. This Prochlorococcus marinus (strain NATL1A) protein is Large ribosomal subunit protein uL14.